An 828-amino-acid polypeptide reads, in one-letter code: Phenylalanine--tRNA ligase beta subunit (828 aa).

The tRNA-binding domain occupies 44-155; sequence GPVDGPLTVG…GTAEPGADGA (112 aa). The region spanning 411–486 is the B5 domain; that stretch reads WSPPAIQMPA…RLEGLEVIGS (76 aa). The Mg(2+) site is built by D464, D470, E473, and E474. The region spanning 734 to 827 is the FDX-ACB domain; the sequence is SPFPAVFQDV…AAEAVGAELR (94 aa).

Belongs to the phenylalanyl-tRNA synthetase beta subunit family. Type 1 subfamily. In terms of assembly, tetramer of two alpha and two beta subunits. Mg(2+) is required as a cofactor.

The protein localises to the cytoplasm. It carries out the reaction tRNA(Phe) + L-phenylalanine + ATP = L-phenylalanyl-tRNA(Phe) + AMP + diphosphate + H(+). In Mycolicibacterium paratuberculosis (strain ATCC BAA-968 / K-10) (Mycobacterium paratuberculosis), this protein is Phenylalanine--tRNA ligase beta subunit.